We begin with the raw amino-acid sequence, 251 residues long: Imidazole glycerol phosphate synthase subunit HisF (251 aa).

Residues aspartate 11 and aspartate 130 contribute to the active site.

Belongs to the HisA/HisF family. Heterodimer of HisH and HisF.

It localises to the cytoplasm. It carries out the reaction 5-[(5-phospho-1-deoxy-D-ribulos-1-ylimino)methylamino]-1-(5-phospho-beta-D-ribosyl)imidazole-4-carboxamide + L-glutamine = D-erythro-1-(imidazol-4-yl)glycerol 3-phosphate + 5-amino-1-(5-phospho-beta-D-ribosyl)imidazole-4-carboxamide + L-glutamate + H(+). It participates in amino-acid biosynthesis; L-histidine biosynthesis; L-histidine from 5-phospho-alpha-D-ribose 1-diphosphate: step 5/9. In terms of biological role, IGPS catalyzes the conversion of PRFAR and glutamine to IGP, AICAR and glutamate. The HisF subunit catalyzes the cyclization activity that produces IGP and AICAR from PRFAR using the ammonia provided by the HisH subunit. The sequence is that of Imidazole glycerol phosphate synthase subunit HisF from Chlorobium limicola (strain DSM 245 / NBRC 103803 / 6330).